We begin with the raw amino-acid sequence, 73 residues long: Protein kish (73 aa).

A signal peptide spans 1 to 21; it reads MTAIFNFESLLFVILLTICTC. At 22 to 52 the chain is on the lumenal side; the sequence is TYLHRQFPALLEKRKEGVTMVFWKCARIGER. The helical transmembrane segment at 53-73 threads the bilayer; the sequence is ASPYISLFCVFMALRFIFGSS.

Belongs to the KISH family.

Its subcellular location is the golgi apparatus membrane. It is found in the endoplasmic reticulum membrane. In terms of biological role, involved in the early part of the secretory pathway. The chain is Protein kish (ksh1) from Schizosaccharomyces pombe (strain 972 / ATCC 24843) (Fission yeast).